A 303-amino-acid polypeptide reads, in one-letter code: Agmatinase (303 aa).

H126, D149, H151, D153, D230, and D232 together coordinate Mn(2+).

The protein belongs to the arginase family. Agmatinase subfamily. Mn(2+) is required as a cofactor.

It catalyses the reaction agmatine + H2O = urea + putrescine. Catalyzes the formation of putrescine from agmatine. The chain is Agmatinase (speB) from Blochmanniella floridana.